Consider the following 130-residue polypeptide: Small ribosomal subunit protein uS9 (130 aa).

The protein belongs to the universal ribosomal protein uS9 family.

The sequence is that of Small ribosomal subunit protein uS9 from Pseudomonas paraeruginosa (strain DSM 24068 / PA7) (Pseudomonas aeruginosa (strain PA7)).